Here is a 403-residue protein sequence, read N- to C-terminus: NADH-quinone oxidoreductase subunit D (403 aa).

This sequence belongs to the complex I 49 kDa subunit family. NDH-1 is composed of 14 different subunits. Subunits NuoB, C, D, E, F, and G constitute the peripheral sector of the complex.

It is found in the cell inner membrane. The catalysed reaction is a quinone + NADH + 5 H(+)(in) = a quinol + NAD(+) + 4 H(+)(out). Its function is as follows. NDH-1 shuttles electrons from NADH, via FMN and iron-sulfur (Fe-S) centers, to quinones in the respiratory chain. The immediate electron acceptor for the enzyme in this species is believed to be ubiquinone. Couples the redox reaction to proton translocation (for every two electrons transferred, four hydrogen ions are translocated across the cytoplasmic membrane), and thus conserves the redox energy in a proton gradient. This Ruegeria sp. (strain TM1040) (Silicibacter sp.) protein is NADH-quinone oxidoreductase subunit D.